Consider the following 836-residue polypeptide: Conserved oligomeric Golgi complex subunit 7 (836 aa).

2 coiled-coil regions span residues 29-49 (QDSLEKHLVDLEMKLQIASEE) and 107-127 (LARVDNVKQRMEAAYKTLQDA). Residues 246-265 (KLANERSESQRLSSGDEFQS) form a disordered region.

This sequence belongs to the COG7 family. Component of the conserved oligomeric Golgi complex which is composed of eight different subunits and is required for normal Golgi morphology and localization. Interacts with COG5 and COG6.

The protein localises to the golgi apparatus membrane. Functionally, required for normal Golgi function. Necessary for embryo development and pigmentation, especially for the expansion of cells and organs, and for the formation of the organized shoot apical meristem (SAM). Probably involved in the generation of the extra-cellular matrix. This chain is Conserved oligomeric Golgi complex subunit 7, found in Arabidopsis thaliana (Mouse-ear cress).